Reading from the N-terminus, the 97-residue chain is Large ribosomal subunit protein bL28 (97 aa).

Belongs to the bacterial ribosomal protein bL28 family.

The polypeptide is Large ribosomal subunit protein bL28 (Bartonella quintana (strain Toulouse) (Rochalimaea quintana)).